The sequence spans 90 residues: Molybdopterin synthase sulfur carrier subunit (90 aa).

Glycine 90 carries the 1-thioglycine; alternate modification. Glycine 90 bears the Glycyl adenylate; alternate mark.

This sequence belongs to the MoaD family. MOCS2A subfamily. In terms of assembly, heterotetramer; composed of 2 small (Mocs2A) and 2 large (Mocs2B) subunits. Post-translationally, C-terminal thiocarboxylation occurs in 2 steps, it is first acyl-adenylated (-COAMP) via the hesA/moeB/thiF part of MOCS3, then thiocarboxylated (-COSH) via the rhodanese domain of MOCS3.

The protein resides in the cytoplasm. Its pathway is cofactor biosynthesis; molybdopterin biosynthesis. Functionally, acts as a sulfur carrier required for molybdopterin biosynthesis. Component of the molybdopterin synthase complex that catalyzes the conversion of precursor Z into molybdopterin by mediating the incorporation of 2 sulfur atoms into precursor Z to generate a dithiolene group. In the complex, serves as sulfur donor by being thiocarboxylated (-COSH) at its C-terminus by MOCS3. After interaction with Mocs2B, the sulfur is then transferred to precursor Z to form molybdopterin. This is Molybdopterin synthase sulfur carrier subunit from Drosophila yakuba (Fruit fly).